The chain runs to 321 residues: Probable arabinan endo-1,5-alpha-L-arabinosidase C (321 aa).

The N-terminal stretch at 1-20 is a signal peptide; it reads MYLYTLILLFLASVNVNAYA. The Proton acceptor role is filled by Asp33. Asn75 and Asn192 each carry an N-linked (GlcNAc...) asparagine glycan. Glu200 functions as the Proton donor in the catalytic mechanism. The N-linked (GlcNAc...) asparagine glycan is linked to Asn224.

Belongs to the glycosyl hydrolase 43 family.

It is found in the secreted. It carries out the reaction Endohydrolysis of (1-&gt;5)-alpha-arabinofuranosidic linkages in (1-&gt;5)-arabinans.. It functions in the pathway glycan metabolism; L-arabinan degradation. Its function is as follows. Endo-1,5-alpha-L-arabinanase involved in degradation of pectin. Its preferred substrate is linear 1,5-alpha-L-arabinan. The protein is Probable arabinan endo-1,5-alpha-L-arabinosidase C (abnC) of Neosartorya fischeri (strain ATCC 1020 / DSM 3700 / CBS 544.65 / FGSC A1164 / JCM 1740 / NRRL 181 / WB 181) (Aspergillus fischerianus).